Consider the following 1065-residue polypeptide: Pumilio domain-containing protein P35G2.14 (1065 aa).

Disordered stretches follow at residues 1–78 (MHQD…SLRS), 130–265 (ITSK…PWSP), and 422–573 (TTGF…NTNS). Over residues 16–44 (RNTISKPSNNNPPLDMSSLNNDFGQQLDS) the composition is skewed to polar residues. The span at 59 to 77 (NPSSNFNDSNRSNISSSLR) shows a compositional bias: low complexity. 2 stretches are compositionally biased toward polar residues: residues 134 to 151 (LQNN…RGRT) and 169 to 189 (SSVS…HFNP). Low complexity-rich tracts occupy residues 190–224 (SSSS…SEII) and 236–246 (SASNAANSGSN). Composition is skewed to polar residues over residues 247–262 (TIRA…NTLP) and 434–455 (GLNT…TFEV). Residue T260 is modified to Phosphothreonine. Over residues 470–483 (PLGSLSSRPKPSSS) the composition is skewed to low complexity. 2 stretches are compositionally biased toward polar residues: residues 495–522 (LKTS…SSSP) and 529–551 (IHNQ…NGLR). S506, S511, and S515 each carry phosphoserine. T554 carries the phosphothreonine modification. The segment covering 559 to 573 (NISTRSSSESNNTNS) has biased composition (low complexity). The RRM domain occupies 592–666 (HALWVGNLPS…DPVCISFAKV (75 aa)). Residues 712-1065 (DLSKIYQILN…ELKKLAEVCA (354 aa)) enclose the PUM-HD domain. Pumilio repeat units follow at residues 771–808 (AINW…MMLE), 809–844 (RIAP…RLIA), 846–884 (HLQP…AILN), 886–917 (FWVI…VLVA), 919–954 (AITV…ILLT), and 956–993 (RFVQ…LVVD).

The protein localises to the cytoplasm. This Schizosaccharomyces pombe (strain 972 / ATCC 24843) (Fission yeast) protein is Pumilio domain-containing protein P35G2.14.